The primary structure comprises 326 residues: DnaJ homolog subfamily B member 6 (326 aa).

The region spanning valine 2 to glycine 69 is the J domain. An interaction with HSP70 region spans residues valine 2–glycine 146. Positions phenylalanine 119–arginine 242 are interaction with KRT18. Arginine 135 is subject to Omega-N-methylarginine. The interval alanine 249 to histidine 326 is disordered. The residue at position 277 (serine 277) is a Phosphoserine.

Homooligomer. Interacts with BAG3, HSPB8 and STUB1. Interacts with ALKBH1. Interacts with HSP70, KRT18 and PTTG.

The protein resides in the cytoplasm. Its subcellular location is the perinuclear region. The protein localises to the nucleus. It is found in the myofibril. It localises to the sarcomere. The protein resides in the z line. In terms of biological role, has a stimulatory effect on the ATPase activity of HSP70 in a dose-dependent and time-dependent manner and hence acts as a co-chaperone of HSP70. Plays an indispensable role in the organization of KRT8/KRT18 filaments. Acts as an endogenous molecular chaperone for neuronal proteins including huntingtin. Suppresses aggregation and toxicity of polyglutamine-containing, aggregation-prone proteins. Also reduces cellular toxicity and caspase-3 activity. In Pongo abelii (Sumatran orangutan), this protein is DnaJ homolog subfamily B member 6 (DNAJB6).